Reading from the N-terminus, the 278-residue chain is Alcohol dehydrogenase-related 31 kDa protein (278 aa).

NAD(+) is bound at residue 11 to 34 (YVADCGGIALETSKVLMTKNIAKL). S139 provides a ligand contact to substrate. Y152 serves as the catalytic Proton acceptor.

The protein belongs to the short-chain dehydrogenases/reductases (SDR) family.

The sequence is that of Alcohol dehydrogenase-related 31 kDa protein (Adhr) from Drosophila persimilis (Fruit fly).